A 289-amino-acid chain; its full sequence is Aquaporin PIP1-1 (289 aa).

The tract at residues 1-36 (MEGKEEDVRLGANRYSERQPIGTAAQGAGDDKDYKE) is disordered. 2 helical membrane passes run 58–78 (IAEFVATFLFLYITILTVMGV) and 93–115 (IAWSFGGMIFALVYCTAGISGGH). The NPA 1 signature appears at 117-119 (NPA). 3 consecutive transmembrane segments (helical) span residues 136-156 (IFYIVMQCLGAICGAGVVKGF), 178-198 (GDGLGAEIVGTFILVYTVFSA), and 212-232 (ILAPLPIGFAVFLVHLATIPI). An NPA 2 motif is present at residues 238-240 (NPA). A helical membrane pass occupies residues 260–280 (IFWVGPFVGAALAAIYHQVII).

The protein belongs to the MIP/aquaporin (TC 1.A.8) family. PIP (TC 1.A.8.11) subfamily. In terms of tissue distribution, expressed in roots, leaves and anthers.

The protein resides in the cell membrane. In terms of biological role, may function as water channel to facilitate the transport of water across cell membrane. In Oryza sativa subsp. japonica (Rice), this protein is Aquaporin PIP1-1 (PIP1-1).